Consider the following 856-residue polypeptide: Lon protease (856 aa).

One can recognise a Lon N-terminal domain in the interval Phe-68–Ile-261. Residue Gly-412–Thr-419 participates in ATP binding. A Lon proteolytic domain is found at Glu-647–Arg-828. Active-site residues include Ser-734 and Lys-777.

It belongs to the peptidase S16 family. In terms of assembly, homohexamer. Organized in a ring with a central cavity.

Its subcellular location is the cytoplasm. The catalysed reaction is Hydrolysis of proteins in presence of ATP.. Its function is as follows. ATP-dependent serine protease that mediates the selective degradation of mutant and abnormal proteins as well as certain short-lived regulatory proteins. Required for cellular homeostasis and for survival from DNA damage and developmental changes induced by stress. Degrades polypeptides processively to yield small peptide fragments that are 5 to 10 amino acids long. Binds to DNA in a double-stranded, site-specific manner. The chain is Lon protease from Azorhizobium caulinodans (strain ATCC 43989 / DSM 5975 / JCM 20966 / LMG 6465 / NBRC 14845 / NCIMB 13405 / ORS 571).